Here is a 787-residue protein sequence, read N- to C-terminus: LPS-assembly protein LptD (787 aa).

An N-terminal signal peptide occupies residues 1 to 39; it reads MPPKTLFPLVPACDAAPRKKRLAVALLAVPGLVPAVSQA.

This sequence belongs to the LptD family. In terms of assembly, component of the lipopolysaccharide transport and assembly complex. Interacts with LptE and LptA.

It localises to the cell outer membrane. Together with LptE, is involved in the assembly of lipopolysaccharide (LPS) at the surface of the outer membrane. This is LPS-assembly protein LptD from Burkholderia pseudomallei (strain 1710b).